The sequence spans 1022 residues: Sodium/potassium-transporting ATPase subunit alpha (1022 aa).

A propeptide spanning residues 1 to 5 (MGKGA) is cleaved from the precursor. The tract at residues 1-34 (MGKGAASEKYQPAATSENAKNSKKSKSKTTDLDE) is disordered. The Cytoplasmic segment spans residues 6–87 (ASEKYQPAAT…NALTPPPTTP (82 aa)). Residue serine 16 is modified to Phosphoserine; by PKC. Residues 82 to 84 (PPP) form an interaction with phosphoinositide-3 kinase region. A helical transmembrane segment spans residues 88–108 (EWIKFCRQLFGGFSILLWTGA). At 109–131 (ILCFLAYGIQVATVDNPANDNLY) the chain is on the lumenal side. A helical transmembrane segment spans residues 132 to 152 (LGVVLSTVVIITGCFSYYQEA). The Cytoplasmic portion of the chain corresponds to 153–288 (KSSKIMDSFK…VGQTPIAAEI (136 aa)). Residues 215–235 (NSSLTGESEPQSRSPEYSSEN) are disordered. The chain crosses the membrane as a helical span at residues 289 to 308 (EHFIHIITGVAVFLGVSFFI). The Lumenal portion of the chain corresponds to 309–320 (LSLILGYTWLEA). The chain crosses the membrane as a helical span at residues 321–338 (VIFLIGIIVANVPEGLLA). The Cytoplasmic portion of the chain corresponds to 339-771 (TVTVCLTLTA…EEGRLIFDNL (433 aa)). Aspartate 376 functions as the 4-aspartylphosphate intermediate in the catalytic mechanism. Positions 716 and 720 each coordinate Mg(2+). The chain crosses the membrane as a helical span at residues 772-791 (KKSIAYTLTSNIPEITPFLV). Over 792–801 (FIIANVPLPL) the chain is Lumenal. The helical transmembrane segment at 802-822 (GTVTILCIDLGTDMVPAISLA) threads the bilayer. The Cytoplasmic portion of the chain corresponds to 823 to 842 (YERAESDIMKRQPRNPKTDK). The helical transmembrane segment at 843 to 865 (LVNERLISMAYGQIGMIQALGGF) threads the bilayer. Residues 866-917 (FSYFVILAENGFLPIDLIGIREKWDELWTQDLEDSYGQQWTYEQRKIVEYTC) are Lumenal-facing. Residues 918-937 (HTSFFVSIVIVQWADLIICK) traverse the membrane as a helical segment. The Cytoplasmic portion of the chain corresponds to 938–950 (TRRNSIFQQGMKN). Phosphoserine; by PKA is present on serine 942. Residues 951 to 969 (KILIFGLFEETALAAFLSY) traverse the membrane as a helical segment. The Lumenal segment spans residues 970–984 (TPGTDIALRMYPLKP). A helical membrane pass occupies residues 985 to 1005 (SWWFCAFPYSLIIFLYDEARR). Residues 1006 to 1022 (FILRRNPGGWVEQETYY) are Cytoplasmic-facing.

It belongs to the cation transport ATPase (P-type) (TC 3.A.3) family. Type IIC subfamily. As to quaternary structure, the sodium/potassium-transporting ATPase is composed of a catalytic alpha subunit, an auxiliary non-catalytic beta subunit and an additional regulatory subunit.

The protein resides in the cell membrane. The enzyme catalyses K(+)(out) + Na(+)(in) + ATP + H2O = K(+)(in) + Na(+)(out) + ADP + phosphate + H(+). In terms of biological role, this is the catalytic component of the active enzyme, which catalyzes the hydrolysis of ATP coupled with the exchange of sodium and potassium ions across the plasma membrane. This action creates the electrochemical gradient of sodium and potassium ions, providing the energy for active transport of various nutrients. This is Sodium/potassium-transporting ATPase subunit alpha from Tetronarce californica (Pacific electric ray).